The sequence spans 554 residues: Undecaprenyl phosphate-alpha-4-amino-4-deoxy-L-arabinose arabinosyl transferase (554 aa).

The next 11 helical transmembrane spans lie at 4-24 (LKDS…LLPV), 87-107 (FGSI…ATLL), 115-135 (VLAT…TYAV), 178-198 (FMTK…PIVI), 206-226 (LVVF…PWAL), 262-282 (YLPI…GALF), 293-313 (ELFF…VAKG), 315-335 (LPTY…AYAT), 351-371 (VINL…GLGL), 384-404 (QKVW…FITL), and 414-434 (AAAC…QQVV).

It belongs to the glycosyltransferase 83 family.

It is found in the cell inner membrane. It catalyses the reaction 4-amino-4-deoxy-alpha-L-arabinopyranosyl di-trans,octa-cis-undecaprenyl phosphate + lipid IVA = lipid IIA + di-trans,octa-cis-undecaprenyl phosphate.. The protein operates within lipopolysaccharide metabolism; 4-amino-4-deoxy-beta-L-arabinose-lipid A biosynthesis. In terms of biological role, catalyzes the transfer of the L-Ara4N moiety of the glycolipid undecaprenyl phosphate-alpha-L-Ara4N to lipid A. The modified arabinose is attached to lipid A and is required for resistance to polymyxin and cationic antimicrobial peptides. This is Undecaprenyl phosphate-alpha-4-amino-4-deoxy-L-arabinose arabinosyl transferase from Yersinia pseudotuberculosis serotype O:3 (strain YPIII).